A 448-amino-acid chain; its full sequence is 26S proteasome regulatory subunit 4 homolog (448 aa).

Residues Met-1–Pro-16 are compositionally biased toward gly residues. 2 disordered regions span residues Met-1–Arg-56 and Leu-93–Gly-112. 2 stretches are compositionally biased toward basic and acidic residues: residues Gly-17 to Glu-33 and Leu-93 to Arg-111. Gly-234–Thr-241 is an ATP binding site.

The protein belongs to the AAA ATPase family.

The protein resides in the cytoplasm. The protein localises to the nucleus. In terms of biological role, the 26S proteasome is involved in the ATP-dependent degradation of ubiquitinated proteins. The regulatory (or ATPase) complex confers ATP dependency and substrate specificity to the 26S complex. This is 26S proteasome regulatory subunit 4 homolog (TBP2) from Oryza sativa subsp. japonica (Rice).